Reading from the N-terminus, the 895-residue chain is Serine/threonine-protein kinase-like protein ACR4 (895 aa).

The first 29 residues, 1–29 (MRMFETRAREWILLVKLVLFTSIWQLASA), serve as a signal peptide directing secretion. The Extracellular segment spans residues 30 to 434 (LGSMSSIAIS…FWSLQLPIAT (405 aa)). 7 consecutive repeat copies span residues 38 to 73 (ISYG…GTPG), 77 to 112 (FIGL…GVPQ), 130 to 167 (LCGL…VFDK), 169 to 202 (LHSL…QVIS), 210 to 245 (FQKI…EEVT), 262 to 296 (LLAV…TPAP), and 301 to 339 (FYDL…AVSP). The 7 X 36 AA repeats stretch occupies residues 38 to 339 (ISYGEGGSVF…PASIPLAVSP (302 aa)). N158 and N196 each carry an N-linked (GlcNAc...) asparagine glycan. An N-linked (GlcNAc...) asparagine glycan is attached at N290. The stretch at 346–395 (PCPPGTHELSNQENSPCKFTGSHICLPCSTSCPPGMYQKSVCTERSDQVC) is one TNFR-Cys repeat. 3 disulfide bridges follow: C347–C370, C373–C387, and C377–C395. Residues N398 and N410 are each glycosylated (N-linked (GlcNAc...) asparagine). A helical membrane pass occupies residues 435–455 (AEIGFALFLVAVVSITAALYI). At 456–895 (RYRLRNCRCS…GQSLFLHHNF (440 aa)) the chain is on the cytoplasmic side. Position 475 is a phosphoserine (S475). The region spanning 512–789 (FKEESIVGKG…KVTTALERAL (278 aa)) is the Protein kinase domain. ATP-binding positions include 518–526 (VGKGSFSCV) and K540. The Proton acceptor role is filled by D641. A disordered region spans residues 818–895 (SWRIGSKRSG…GQSLFLHHNF (78 aa)). Residues 865-877 (EGRKQQEALRSLE) are compositionally biased toward basic and acidic residues.

This sequence belongs to the protein kinase superfamily. Ser/Thr protein kinase family. Homodimer. Interacts with PP2A3. Post-translationally, autophosphorylated and phosphorylated by ALE2. In terms of tissue distribution, expressed in seedlings, floral buds, siliques, leaves, shoot apical meristems (SAM), and, to a lower extent, in roots.

It is found in the cell membrane. The protein localises to the endosome. It localises to the multivesicular body membrane. It catalyses the reaction L-seryl-[protein] + ATP = O-phospho-L-seryl-[protein] + ADP + H(+). The enzyme catalyses L-threonyl-[protein] + ATP = O-phospho-L-threonyl-[protein] + ADP + H(+). In terms of biological role, controls formative cell division in meristems, including root tips and lateral root initiation zones of the pericycle, in response to CLE40 signal. Acts with CLE40p peptide as a ligand-receptor pair in a signal transduction pathway, coordinating movement of the root tip and organization of cell divisions in the root meristem. Required during embryogenesis and development, probably for the differentiation of protoderm and epidermal cells. Involved in the regulation of cellular organization during the development of sepal margins and ovule integument outgrowth and promotes giant cell formation. Can phosphorylate ALE2. The protein is Serine/threonine-protein kinase-like protein ACR4 of Arabidopsis thaliana (Mouse-ear cress).